The chain runs to 845 residues: ABC transporter A family member 9 (845 aa).

7 helical membrane passes run 33 to 53 (CVQI…NFWV), 192 to 212 (AFVA…FLGG), 235 to 255 (IASL…MPLF), 292 to 312 (IYFI…FAVF), 318 to 338 (FAMF…SFFL), 347 to 367 (AASI…SILS), and 417 to 437 (SKII…ALYL). One can recognise an ABC transporter domain in the interval 531–762 (VIIEGLTKHY…FGDGYSVRIN (232 aa)). 565–572 (GANGAGKT) provides a ligand contact to ATP.

Belongs to the ABC transporter superfamily. ABCA family.

The protein localises to the membrane. The protein is ABC transporter A family member 9 (abcA9) of Dictyostelium discoideum (Social amoeba).